The sequence spans 336 residues: Isethionate-binding periplasmic protein DctP (336 aa).

Positions 1-23 (MKHLLKAGALVALACIVTLTAGA) are cleaved as a signal peptide.

The protein belongs to the bacterial solute-binding protein 7 family. In terms of assembly, the complex comprises the periplasmic solute receptor protein DctP, and the fused transmembrane protein DctMQ.

The protein localises to the periplasm. The catalysed reaction is 2-hydroxyethane-1-sulfonate(out) + Na(+)(out) = 2-hydroxyethane-1-sulfonate(in) + Na(+)(in). It functions in the pathway organosulfur degradation; alkanesulfonate degradation. In terms of biological role, part of the tripartite ATP-independent periplasmic (TRAP) transport system DctPQM involved in the uptake of isethionate (2-hydroxyethanesulfonate), which is then catabolized by enzymes encoded by adjacent genes in the locus. The DctP subunit is the solute-binding protein. Thereby is involved in an anaerobic respiration pathway that converts the sulfonate isethionate to ammonia, acetate and sulfide. This Oleidesulfovibrio alaskensis (strain ATCC BAA-1058 / DSM 17464 / G20) (Desulfovibrio alaskensis) protein is Isethionate-binding periplasmic protein DctP.